A 257-amino-acid chain; its full sequence is Zinc transporter ZupT (257 aa).

Transmembrane regions (helical) follow at residues 5–25, 32–52, 61–81, 109–129, 137–157, 171–191, 195–215, and 236–256; these read LILTILAGAATFIGAFLGVLG, LLAFSLGFAAGIMLLISLMEM, GMSPVLGYGMFIFGLLGYLGL, AILLTLGISLHNFPEGIATFV, LGFGIALAVALHNIPEGLAVV, ILWAGISGLAEILGGVLAWLI, MISPVVMAAIMAAVAGIMVAL, and GVLCGMSVMGFSLVLLQTAGI. 2 residues coordinate Fe(2+): N120 and E123. E123 and H148 together coordinate Zn(2+). Fe(2+) is bound by residues N149, E152, and E181. Residue E152 coordinates Zn(2+).

It belongs to the ZIP transporter (TC 2.A.5) family. ZupT subfamily.

It is found in the cell inner membrane. The enzyme catalyses Zn(2+)(in) = Zn(2+)(out). Functionally, mediates zinc uptake. May also transport other divalent cations. In Shigella dysenteriae serotype 1 (strain Sd197), this protein is Zinc transporter ZupT.